A 404-amino-acid chain; its full sequence is Alanyl-tRNA editing protein AlaX-L (404 aa).

Residues His104, His108, Cys202, and His206 each coordinate Zn(2+).

The protein belongs to the class-II aminoacyl-tRNA synthetase family. Editing domain AlaX-L subfamily. It depends on Zn(2+) as a cofactor.

It localises to the cytoplasm. Functions in trans to edit the amino acid moiety from mischarged charged tRNA(Ala). This chain is Alanyl-tRNA editing protein AlaX-L (alaXL), found in Pyrococcus horikoshii (strain ATCC 700860 / DSM 12428 / JCM 9974 / NBRC 100139 / OT-3).